The following is a 196-amino-acid chain: Probable nicotinate-nucleotide adenylyltransferase (196 aa).

Belongs to the NadD family.

The enzyme catalyses nicotinate beta-D-ribonucleotide + ATP + H(+) = deamido-NAD(+) + diphosphate. It functions in the pathway cofactor biosynthesis; NAD(+) biosynthesis; deamido-NAD(+) from nicotinate D-ribonucleotide: step 1/1. Catalyzes the reversible adenylation of nicotinate mononucleotide (NaMN) to nicotinic acid adenine dinucleotide (NaAD). The protein is Probable nicotinate-nucleotide adenylyltransferase of Caldicellulosiruptor bescii (strain ATCC BAA-1888 / DSM 6725 / KCTC 15123 / Z-1320) (Anaerocellum thermophilum).